The following is a 139-amino-acid chain: MRVTLSDTALRHIALFEDVTGASAVDCLVDDDRVCFLVATGEMSDAIGPDGTTVEQVEERLDKRVSLVENADTAELFVANALAPAVVHNVTISENASTVAYAEVDRADTGVAIGRDGETIETARRLAERQFDIDDIELA.

One can recognise a KH domain in the interval 97–139 (STVAYAEVDRADTGVAIGRDGETIETARRLAERQFDIDDIELA).

It belongs to the NusA family.

It is found in the cytoplasm. In terms of biological role, participates in transcription termination. In Halococcus morrhuae (Micrococcus morrhuae), this protein is Probable transcription termination protein NusA.